Here is a 407-residue protein sequence, read N- to C-terminus: Histone-lysine N-methyltransferase SUV39H2 (407 aa).

Residues 43–101 form the Chromo domain; it reads YEVEYLCDYKVEEGKEYYLVKWKGWPESSNTWEPQKNLKCPKLLENFLSDKDEYLSRMK. Positions 185 to 243 constitute a Pre-SET domain; that stretch reads TGCECSDCPAEKCCPKEAGFILAYNKQKKLKIQPGLPIYECNSFCRCGPDCPNRIVQKG. Positions 187, 189, 192, 197, 198, 225, 229, 231, and 235 each coordinate Zn(2+). The SET domain occupies 246 to 369; sequence YSLCIFRTNN…AGEELTFDYQ (124 aa). Residues 257–259, tyrosine 300, and 326–327 contribute to the S-adenosyl-L-methionine site; these read RGW and NH. Residues cysteine 329, cysteine 395, cysteine 397, and cysteine 402 each coordinate Zn(2+). Residues 391–407 form the Post-SET domain; that stretch reads IRTVCKCGAVCCRGYLN.

This sequence belongs to the class V-like SAM-binding methyltransferase superfamily. Histone-lysine methyltransferase family. Suvar3-9 subfamily.

The protein resides in the nucleus. Its subcellular location is the chromosome. It localises to the centromere. The catalysed reaction is L-lysyl(9)-[histone H3] + 3 S-adenosyl-L-methionine = N(6),N(6),N(6)-trimethyl-L-lysyl(9)-[histone H3] + 3 S-adenosyl-L-homocysteine + 3 H(+). Functionally, histone methyltransferase that specifically trimethylates 'Lys-9' of histone H3 using monomethylated H3 'Lys-9' as substrate. H3 'Lys-9' trimethylation represents a specific tag for epigenetic transcriptional repression by recruiting HP1 (CBX1, CBX3 and/or CBX5) proteins to methylated histones. Mainly functions in heterochromatin regions, thereby playing a central role in the establishment of constitutive heterochromatin at pericentric and telomere regions. H3 'Lys-9' trimethylation is also required to direct DNA methylation at pericentric repeats. SUV39H1 is targeted to histone H3 via its interaction with RB1 and is involved in many processes. The protein is Histone-lysine N-methyltransferase SUV39H2 (SUV39H2) of Gallus gallus (Chicken).